Reading from the N-terminus, the 533-residue chain is Beta-1,4-mannosyl-glycoprotein 4-beta-N-acetylglucosaminyltransferase (533 aa).

At 1-7 the chain is on the cytoplasmic side; the sequence is MKMRRYK. The chain crosses the membrane as a helical; Signal-anchor for type II membrane protein span at residues 8 to 23; sequence LFLMFCMAGLCLISFL. At 24 to 533 the chain is on the lumenal side; the sequence is HFFKTLSYVT…ARGKLDEAEV (510 aa). The disordered stretch occupies residues 119–158; it reads KPGTKMLERPPPGRPEEKPEGANGSSARRPPRYLLSARER. N-linked (GlcNAc...) asparagine glycans are attached at residues asparagine 141, asparagine 241, asparagine 259, and asparagine 397. The segment at 507–533 is disordered; that stretch reads STAAGGWRHRGPEGRPPARGKLDEAEV.

Belongs to the glycosyltransferase 17 family. As to quaternary structure, interacts with MGAT4D.

It is found in the golgi apparatus membrane. It carries out the reaction N(4)-{beta-D-GlcNAc-(1-&gt;2)-alpha-D-Man-(1-&gt;3)-[beta-D-GlcNAc-(1-&gt;2)-alpha-D-Man-(1-&gt;6)]-beta-D-Man-(1-&gt;4)-beta-D-GlcNAc-(1-&gt;4)-beta-D-GlcNAc}-L-asparaginyl-[protein] + UDP-N-acetyl-alpha-D-glucosamine = N(4)-{beta-D-GlcNAc-(1-&gt;2)-alpha-D-Man-(1-&gt;3)-[beta-D-GlcNAc-(1-&gt;4)]-[beta-D-GlcNAc-(1-&gt;2)-alpha-D-Man-(1-&gt;6)]-beta-D-Man-(1-&gt;4)-beta-D-GlcNAc-(1-&gt;4)-beta-D-GlcNAc}-L-asparaginyl-[protein] + UDP + H(+). Its pathway is protein modification; protein glycosylation. Its function is as follows. It is involved in the regulation of the biosynthesis and biological function of glycoprotein oligosaccharides. Catalyzes the addition of N-acetylglucosamine in beta 1-4 linkage to the beta-linked mannose of the trimannosyl core of N-linked sugar chains, called bisecting N-acetylglucosamine (GlcNAc). It is one of the most important enzymes involved in the regulation of the biosynthesis of glycoprotein oligosaccharides. The addition of this bisecting GlcNAc residue alters not only the composition, but also the conformation of the N-glycan. The introduction of the bisecting GlcNAc residue results in the suppression of further processing and elongation of N-glycans, precluding the formation of beta-1,6 GlcNAc branching, catalyzed by MGAT5 since it is unable to use the bisected oligosaccharide as a substrate. Addition of bisecting N-acetylglucosamine to CDH1/E-cadherin modulates CDH1 cell membrane location. Inhibits NeuAc-alpha-2,3-Gal-beta-1,4-GlcNAc- formation which modulates sialylation levels and plays a role in cell migration regulation. In brain, addition of bisecting N-acetylglucosamine to BACE1 blocks its lysosomal targeting in response to oxidative stress and further degradation which increases its location to early endosome and the APP cleavage. This is Beta-1,4-mannosyl-glycoprotein 4-beta-N-acetylglucosaminyltransferase from Homo sapiens (Human).